Here is a 210-residue protein sequence, read N- to C-terminus: 3-hexulose-6-phosphate synthase 3 (210 aa).

It belongs to the HPS/KGPDC family. HPS subfamily.

It catalyses the reaction D-ribulose 5-phosphate + formaldehyde = D-arabino-hex-3-ulose 6-phosphate. It participates in one-carbon metabolism; formaldehyde assimilation via RuMP pathway; D-fructose 6-phosphate from D-ribulose 5-phosphate and formaldehyde: step 1/2. Catalyzes the condensation of ribulose 5-phosphate with formaldehyde to form 3-hexulose 6-phosphate. This is 3-hexulose-6-phosphate synthase 3 from Staphylococcus saprophyticus subsp. saprophyticus (strain ATCC 15305 / DSM 20229 / NCIMB 8711 / NCTC 7292 / S-41).